Consider the following 120-residue polypeptide: Large ribosomal subunit protein uL18 (120 aa).

The protein belongs to the universal ribosomal protein uL18 family. Part of the 50S ribosomal subunit; part of the 5S rRNA/L5/L18/L25 subcomplex. Contacts the 5S and 23S rRNAs.

Functionally, this is one of the proteins that bind and probably mediate the attachment of the 5S RNA into the large ribosomal subunit, where it forms part of the central protuberance. The polypeptide is Large ribosomal subunit protein uL18 (Rhizobium etli (strain CIAT 652)).